Here is a 135-residue protein sequence, read N- to C-terminus: Fluoride-specific ion channel FluC (135 aa).

The next 4 membrane-spanning stretches (helical) occupy residues 7–27 (IAAISLGASLGALARYGLGLA), 37–57 (IGTLAANLIAAYVVGVTIAYV), 70–90 (FMITGLAGGLSTFSTFTAELF), and 105–125 (LGLHVGGSLALLMLGMLTIGL). Positions 77 and 80 each coordinate Na(+).

Belongs to the fluoride channel Fluc/FEX (TC 1.A.43) family.

The protein localises to the cell inner membrane. It carries out the reaction fluoride(in) = fluoride(out). With respect to regulation, na(+) is not transported, but it plays an essential structural role and its presence is essential for fluoride channel function. Fluoride-specific ion channel. Important for reducing fluoride concentration in the cell, thus reducing its toxicity. The sequence is that of Fluoride-specific ion channel FluC from Xanthomonas oryzae pv. oryzae (strain MAFF 311018).